The chain runs to 152 residues: 6,7-dimethyl-8-ribityllumazine synthase (152 aa).

5-amino-6-(D-ribitylamino)uracil-binding positions include F21, 55-57 (AFE), and 79-81 (CVI). 84 to 85 (AT) provides a ligand contact to (2S)-2-hydroxy-3-oxobutyl phosphate. The active-site Proton donor is the H87. Position 112 (F112) interacts with 5-amino-6-(D-ribitylamino)uracil. (2S)-2-hydroxy-3-oxobutyl phosphate is bound at residue R126.

It belongs to the DMRL synthase family. As to quaternary structure, forms an icosahedral capsid composed of 60 subunits, arranged as a dodecamer of pentamers.

The catalysed reaction is (2S)-2-hydroxy-3-oxobutyl phosphate + 5-amino-6-(D-ribitylamino)uracil = 6,7-dimethyl-8-(1-D-ribityl)lumazine + phosphate + 2 H2O + H(+). It participates in cofactor biosynthesis; riboflavin biosynthesis; riboflavin from 2-hydroxy-3-oxobutyl phosphate and 5-amino-6-(D-ribitylamino)uracil: step 1/2. Catalyzes the formation of 6,7-dimethyl-8-ribityllumazine by condensation of 5-amino-6-(D-ribitylamino)uracil with 3,4-dihydroxy-2-butanone 4-phosphate. This is the penultimate step in the biosynthesis of riboflavin. This is 6,7-dimethyl-8-ribityllumazine synthase from Staphylococcus carnosus (strain TM300).